The chain runs to 122 residues: Serum amyloid A-2 protein (122 aa).

The first 18 residues, 1-18 (MKLLSGLLLCSLVLGVSG), serve as a signal peptide directing secretion. Residue Gln-19 is modified to Pyrrolidone carboxylic acid. The tract at residues 90-122 (GAEDSMADQAANEWGRSGKDPNHFRPKGLPDKY) is disordered. Basic and acidic residues predominate over residues 105–122 (RSGKDPNHFRPKGLPDKY).

Belongs to the SAA family. In terms of assembly, apolipoprotein of the HDL complex. In terms of tissue distribution, expressed by the liver; secreted in plasma.

The protein localises to the secreted. Its function is as follows. Major acute phase reactant. In Oryctolagus cuniculus (Rabbit), this protein is Serum amyloid A-2 protein (SAA2).